The primary structure comprises 547 residues: Chaperonin GroEL (547 aa).

ATP is bound by residues T30–P33, K51, D87–T91, G415, N479–A481, and D495.

It belongs to the chaperonin (HSP60) family. Forms a cylinder of 14 subunits composed of two heptameric rings stacked back-to-back. Interacts with the co-chaperonin GroES.

It localises to the cytoplasm. The enzyme catalyses ATP + H2O + a folded polypeptide = ADP + phosphate + an unfolded polypeptide.. Its function is as follows. Together with its co-chaperonin GroES, plays an essential role in assisting protein folding. The GroEL-GroES system forms a nano-cage that allows encapsulation of the non-native substrate proteins and provides a physical environment optimized to promote and accelerate protein folding. The chain is Chaperonin GroEL from Acinetobacter baumannii (strain ACICU).